Reading from the N-terminus, the 521-residue chain is MWNSLHMTQARRPLMLMILDGWGYREASEGNAILAAETPNLNSLLNEFPWCFLECSGEAVGLPEGQMGNSEVGHLNIGAGRVVYQDLTRINLSVRNGDFFENPVLLDAISNVKLNDSSLHLMGLVSYGGVHSYMTHLYALIKLARDKGLKKVYIHAFLDGRDVPPKAALADIRELDAFCKENGSARIATVQGRYYAMDRDKRWERSKLAYDALTLGVAPYTTSDAETAVSDAYARGETDEFVKPTVVTGSDGKPEAVVQDNDSIIFFNFRPDRARQLTWAFENDDFDGFPREKRPKVHYVCMAQYDETLDLPIAFPPEELENVLGEVLSKQGLVQLRIAETEKYAHVTFFLNGGQEKCYDGEDRCLIPSPKVATYDLKPEMSAYEVTDEVIRRIQSGKYDVIVLNFANMDMVGHTGIFEAAVQAVEAVDTCVGRIIEALKKAGGVALITADHGNAEQMENQHTGEPHTAHTSNPVRCIYAGKGEVKALENGKLSDLAPTLLDLLGVPKPEEMKGKSLILNE.

D20 and S70 together coordinate Mn(2+). The active-site Phosphoserine intermediate is S70. Substrate is bound by residues H131, 161–162 (RD), R193, R199, 270–273 (RPDR), and K343. D410, H414, D451, H452, and H470 together coordinate Mn(2+).

It belongs to the BPG-independent phosphoglycerate mutase family. Mn(2+) is required as a cofactor.

The catalysed reaction is (2R)-2-phosphoglycerate = (2R)-3-phosphoglycerate. It functions in the pathway carbohydrate degradation; glycolysis; pyruvate from D-glyceraldehyde 3-phosphate: step 3/5. Functionally, catalyzes the interconversion of 2-phosphoglycerate and 3-phosphoglycerate. This Methanosarcina acetivorans (strain ATCC 35395 / DSM 2834 / JCM 12185 / C2A) protein is 2,3-bisphosphoglycerate-independent phosphoglycerate mutase 2.